The sequence spans 216 residues: Pyridoxine/pyridoxamine 5'-phosphate oxidase (216 aa).

Residues 64–69 (RVVLLK), 79–80 (FT), Lys-85, Lys-86, and Gln-108 contribute to the FMN site. Position 69 (Lys-69) interacts with substrate. Substrate is bound by residues Tyr-126, Arg-130, and Ser-134. FMN is bound by residues 143 to 144 (QS) and Trp-188. 194 to 196 (RKH) serves as a coordination point for substrate. Position 198 (Arg-198) interacts with FMN.

Belongs to the pyridoxamine 5'-phosphate oxidase family. As to quaternary structure, homodimer. FMN is required as a cofactor.

It catalyses the reaction pyridoxamine 5'-phosphate + O2 + H2O = pyridoxal 5'-phosphate + H2O2 + NH4(+). The enzyme catalyses pyridoxine 5'-phosphate + O2 = pyridoxal 5'-phosphate + H2O2. It participates in cofactor metabolism; pyridoxal 5'-phosphate salvage; pyridoxal 5'-phosphate from pyridoxamine 5'-phosphate: step 1/1. Its pathway is cofactor metabolism; pyridoxal 5'-phosphate salvage; pyridoxal 5'-phosphate from pyridoxine 5'-phosphate: step 1/1. Catalyzes the oxidation of either pyridoxine 5'-phosphate (PNP) or pyridoxamine 5'-phosphate (PMP) into pyridoxal 5'-phosphate (PLP). This Wolbachia pipientis wMel protein is Pyridoxine/pyridoxamine 5'-phosphate oxidase.